Here is a 459-residue protein sequence, read N- to C-terminus: DNA polymerase subunit gamma-2 (459 aa).

Heterotrimer composed of a catalytic subunit and a homodimer of accessory subunits (POLG:POLG2).

It is found in the mitochondrion. Its subcellular location is the mitochondrion matrix. The protein resides in the mitochondrion nucleoid. Its function is as follows. Accessory subunit of DNA polymerase gamma solely responsible for replication of mitochondrial DNA (mtDNA). Acts as an allosteric regulator of the holoenzyme activities. Enhances the polymerase activity and the processivity of POLG by increasing its interactions with the DNA template. Suppresses POLG exonucleolytic proofreading especially toward homopolymeric templates bearing mismatched termini. Binds to single-stranded DNA. This is DNA polymerase subunit gamma-2 (Polg2) from Mus musculus (Mouse).